Here is a 217-residue protein sequence, read N- to C-terminus: RING-H2 finger protein ATL40 (217 aa).

Residues 28–48 (IFLVTTVSFSIIIIIVFVYYL) traverse the membrane as a helical segment. The RING-type; atypical zinc finger occupies 100-142 (CAVCLSLLEEKDNARMLPNCKHVFHVSCVDTWLTTQSTCPVCR). Composition is skewed to basic and acidic residues over residues 143–160 (TEAEPSHPRLEPEPREGP) and 186–217 (DSFRRILTRERSSNRRDHSRVDQDRELDIERQ). Residues 143–217 (TEAEPSHPRL…QDRELDIERQ (75 aa)) are disordered.

Belongs to the RING-type zinc finger family. ATL subfamily.

The protein localises to the membrane. The enzyme catalyses S-ubiquitinyl-[E2 ubiquitin-conjugating enzyme]-L-cysteine + [acceptor protein]-L-lysine = [E2 ubiquitin-conjugating enzyme]-L-cysteine + N(6)-ubiquitinyl-[acceptor protein]-L-lysine.. Its pathway is protein modification; protein ubiquitination. This Arabidopsis thaliana (Mouse-ear cress) protein is RING-H2 finger protein ATL40 (ATL40).